A 183-amino-acid polypeptide reads, in one-letter code: Translation initiation factor IF-3 (183 aa).

The protein belongs to the IF-3 family. Monomer.

The protein resides in the cytoplasm. In terms of biological role, IF-3 binds to the 30S ribosomal subunit and shifts the equilibrium between 70S ribosomes and their 50S and 30S subunits in favor of the free subunits, thus enhancing the availability of 30S subunits on which protein synthesis initiation begins. In Serratia marcescens, this protein is Translation initiation factor IF-3.